The following is a 376-amino-acid chain: MPNDLYAIYNRYTSRTLFFKYCATATLTHRLTRRLSLFTLKKCLARPQGRLFSLVNSIYFGGETLEEVQSTATFLARSGIACVLDYAVEGENDETQFDKAMENTLRLIEMSQQTDSLPFVVIKPSSLGSVAVYARQSERLALDEASASAWSRIVTRFSRLFDYARSHGVHVMVDAEQTAIQPAVDRLVLDMMREFNRDSAVITLTLQFYLKDQLRFLDECYQRACQDNFLFGVKVVRGAYLEEEKRVNGGVRCFATKQETDRSYNAAVDYIALRLDRIAPFFATHNEESLALIMSSESLRAGRTWVGQLYGLGDHITYSLLQTGFRVCKYLPYGPLDKSLPYLLRRIEENAVASATFKKENKLLQKELLRRLVGGM.

Belongs to the proline oxidase family.

Its pathway is antibiotic biosynthesis; carbapenem biosynthesis. This Pectobacterium carotovorum subsp. carotovorum (Erwinia carotovora subsp. carotovora) protein is Carbapenem antibiotics biosynthesis protein CarD (carD).